The primary structure comprises 349 residues: Ornithine carbamoyltransferase, mitochondrial (349 aa).

Residues 73–76 (STRT), R124, H151, and Q154 each bind carbamoyl phosphate. L-ornithine-binding residues include N195, D261, S265, and M266. Catalysis depends on C303, which acts as the Proton acceptor. Carbamoyl phosphate contacts are provided by residues 303–304 (CL) and R330.

The protein belongs to the aspartate/ornithine carbamoyltransferase superfamily. OTCase family. Homotrimer.

The protein resides in the mitochondrion matrix. It catalyses the reaction carbamoyl phosphate + L-ornithine = L-citrulline + phosphate + H(+). It participates in amino-acid biosynthesis; L-arginine biosynthesis; L-arginine from L-ornithine and carbamoyl phosphate: step 1/3. This chain is Ornithine carbamoyltransferase, mitochondrial, found in Coccidioides immitis (strain RS) (Valley fever fungus).